The following is a 302-amino-acid chain: Nucleotide-binding protein Rsph17025_2562 (302 aa).

Residue 15–22 (GPSGAGRT) coordinates ATP. 62-65 (DVRN) contributes to the GTP binding site.

Belongs to the RapZ-like family.

Displays ATPase and GTPase activities. The protein is Nucleotide-binding protein Rsph17025_2562 of Cereibacter sphaeroides (strain ATCC 17025 / ATH 2.4.3) (Rhodobacter sphaeroides).